A 325-amino-acid chain; its full sequence is GMP reductase (325 aa).

The active-site Thioimidate intermediate is cysteine 173. Residue 202–225 (IIADGGIRSHGDIAKSVRFGATMV) participates in NADP(+) binding.

It belongs to the IMPDH/GMPR family. GuaC type 2 subfamily.

It carries out the reaction IMP + NH4(+) + NADP(+) = GMP + NADPH + 2 H(+). Its function is as follows. Catalyzes the irreversible NADPH-dependent deamination of GMP to IMP. It functions in the conversion of nucleobase, nucleoside and nucleotide derivatives of G to A nucleotides, and in maintaining the intracellular balance of A and G nucleotides. The protein is GMP reductase of Acidovorax ebreus (strain TPSY) (Diaphorobacter sp. (strain TPSY)).